An 87-amino-acid chain; its full sequence is uncharacterized protein (87 aa).

The protein to bacteriophage lambda exonuclease exo.

This is an uncharacterized protein from Escherichia coli (strain K12).